We begin with the raw amino-acid sequence, 35 residues long: Kappa-theraphotoxin-Tb1a (35 aa).

Intrachain disulfides connect Cys-3-Cys-18, Cys-10-Cys-23, and Cys-17-Cys-30.

It belongs to the neurotoxin 10 (Hwtx-1) family. 59 (Tltx) subfamily. As to quaternary structure, monomer. Expressed by the venom gland.

The protein resides in the secreted. Functionally, blocks Kv4.2/KCND2 voltage-gated potassium channels (IC(50) is 193.0 nM) by shifting the voltage-dependence of channel activation to more depolarized potentials. The toxin is thought to bind to the S3-S4 linker region of the voltage sensor domain. This Theraphosa blondi (Goliath birdeating spider) protein is Kappa-theraphotoxin-Tb1a.